We begin with the raw amino-acid sequence, 659 residues long: Mitochondrial Rho GTPase 1 (659 aa).

Residues 1–631 (MTKTRIRIVV…LTNDIDYRQT (631 aa)) are Cytoplasmic-facing. In terms of domain architecture, Miro 1 spans 3-183 (KTRIRIVVCG…FYLCQRTITN (181 aa)). GTP-binding positions include 12–19 (GDSGVGKT), 61–63 (DTG), and 115–118 (NKCD). 2 consecutive EF-hand domains span residues 199-234 (LGVLALKRVFVLSDMDQDGFLNDDEITKLQKKCFSK) and 328-363 (LGYRFFVDTFLKYDKDNDGGLNNDELHLLFKTTPGL). Ca(2+) is bound by residues D212, D214, D216, E223, D341, D343, D345, and E352. In terms of domain architecture, Miro 2 spans 444-609 (RKVLNCYMLG…FIKLTEVALE (166 aa)). Residues 453–460 (GKGNSGKS), 489–493 (ELKGG), and 558–561 (LKAD) each bind GTP. The helical; Anchor for type IV membrane protein transmembrane segment at 632–652 (IVAISSVVGFASLFTFTALKI) threads the bilayer. At 653–659 (YSSFKNT) the chain is on the mitochondrial intermembrane side.

Belongs to the mitochondrial Rho GTPase family.

The protein resides in the mitochondrion outer membrane. Mitochondrial GTPase involved in mitochondrial trafficking. Probably involved in control of anterograde transport of mitochondria and their subcellular distribution. The sequence is that of Mitochondrial Rho GTPase 1 (GEM1) from Kluyveromyces lactis (strain ATCC 8585 / CBS 2359 / DSM 70799 / NBRC 1267 / NRRL Y-1140 / WM37) (Yeast).